Here is a 311-residue protein sequence, read N- to C-terminus: tRNA-cytidine(32) 2-sulfurtransferase (311 aa).

The PP-loop motif motif lies at 47–52 (SGGKDS). [4Fe-4S] cluster-binding residues include cysteine 122, cysteine 125, and cysteine 213.

The protein belongs to the TtcA family. Homodimer. It depends on Mg(2+) as a cofactor. [4Fe-4S] cluster serves as cofactor.

The protein resides in the cytoplasm. The catalysed reaction is cytidine(32) in tRNA + S-sulfanyl-L-cysteinyl-[cysteine desulfurase] + AH2 + ATP = 2-thiocytidine(32) in tRNA + L-cysteinyl-[cysteine desulfurase] + A + AMP + diphosphate + H(+). Its pathway is tRNA modification. Functionally, catalyzes the ATP-dependent 2-thiolation of cytidine in position 32 of tRNA, to form 2-thiocytidine (s(2)C32). The sulfur atoms are provided by the cysteine/cysteine desulfurase (IscS) system. The protein is tRNA-cytidine(32) 2-sulfurtransferase of Salmonella heidelberg (strain SL476).